The sequence spans 336 residues: Dihydroorotate dehydrogenase (quinone) (336 aa).

FMN is bound by residues 62-66 (AGLDK) and T86. Substrate is bound at residue K66. 111–115 (NRMGF) provides a ligand contact to substrate. Residues N139 and N172 each coordinate FMN. N172 lines the substrate pocket. S175 serves as the catalytic Nucleophile. N177 contributes to the substrate binding site. The FMN site is built by K217 and T245. 246 to 247 (NT) provides a ligand contact to substrate. Residues G268, G297, and 318 to 319 (YS) contribute to the FMN site.

Belongs to the dihydroorotate dehydrogenase family. Type 2 subfamily. Monomer. It depends on FMN as a cofactor.

The protein localises to the cell membrane. The enzyme catalyses (S)-dihydroorotate + a quinone = orotate + a quinol. It functions in the pathway pyrimidine metabolism; UMP biosynthesis via de novo pathway; orotate from (S)-dihydroorotate (quinone route): step 1/1. Catalyzes the conversion of dihydroorotate to orotate with quinone as electron acceptor. In Aeromonas hydrophila subsp. hydrophila (strain ATCC 7966 / DSM 30187 / BCRC 13018 / CCUG 14551 / JCM 1027 / KCTC 2358 / NCIMB 9240 / NCTC 8049), this protein is Dihydroorotate dehydrogenase (quinone).